The primary structure comprises 269 residues: Tryptophan synthase alpha chain (269 aa).

Catalysis depends on proton acceptor residues Glu49 and Asp60.

It belongs to the TrpA family. As to quaternary structure, tetramer of two alpha and two beta chains.

The catalysed reaction is (1S,2R)-1-C-(indol-3-yl)glycerol 3-phosphate + L-serine = D-glyceraldehyde 3-phosphate + L-tryptophan + H2O. The protein operates within amino-acid biosynthesis; L-tryptophan biosynthesis; L-tryptophan from chorismate: step 5/5. In terms of biological role, the alpha subunit is responsible for the aldol cleavage of indoleglycerol phosphate to indole and glyceraldehyde 3-phosphate. This chain is Tryptophan synthase alpha chain, found in Stutzerimonas stutzeri (strain A1501) (Pseudomonas stutzeri).